Consider the following 173-residue polypeptide: Shikimate kinase (173 aa).

14–19 (GAGKST) contributes to the ATP binding site. Ser18 contacts Mg(2+). 3 residues coordinate substrate: Asp36, Arg60, and Gly82. Arg120 contacts ATP. Arg140 serves as a coordination point for substrate. Residue Gln157 participates in ATP binding.

This sequence belongs to the shikimate kinase family. In terms of assembly, monomer. It depends on Mg(2+) as a cofactor.

The protein localises to the cytoplasm. The catalysed reaction is shikimate + ATP = 3-phosphoshikimate + ADP + H(+). It participates in metabolic intermediate biosynthesis; chorismate biosynthesis; chorismate from D-erythrose 4-phosphate and phosphoenolpyruvate: step 5/7. Catalyzes the specific phosphorylation of the 3-hydroxyl group of shikimic acid using ATP as a cosubstrate. The polypeptide is Shikimate kinase (Baumannia cicadellinicola subsp. Homalodisca coagulata).